We begin with the raw amino-acid sequence, 298 residues long: MASLKEVKTRINSVKSTRKITSAMKMVASAKLHKAQGAIENMLPYERKLNKILTNFLSADLPVESPYIKAREVKRVAIVAFSSNTSLCGAFNANVIKMLLQTVGEFRTLGQDNILIFPVGKKVDEAVKRLGFEPQETSPTLSDKPSYQEASELAHRLMEMYVSGEIDRVELIYHHFKSMGVQILLRETYLPIDLTRVVDEEEKQKEEEVQGGEIANDYIIEPSAEELIANLIPTVLSQKLFTAAVDSNASEHAARTLAMQVATDNANELIQDLTKQYNKSRQQAITNELLDIVGGSMQ.

It belongs to the ATPase gamma chain family. In terms of assembly, F-type ATPases have 2 components, CF(1) - the catalytic core - and CF(0) - the membrane proton channel. CF(1) has five subunits: alpha(3), beta(3), gamma(1), delta(1), epsilon(1). CF(0) has three main subunits: a, b and c.

It is found in the cell inner membrane. Functionally, produces ATP from ADP in the presence of a proton gradient across the membrane. The gamma chain is believed to be important in regulating ATPase activity and the flow of protons through the CF(0) complex. The chain is ATP synthase gamma chain from Bacteroides thetaiotaomicron (strain ATCC 29148 / DSM 2079 / JCM 5827 / CCUG 10774 / NCTC 10582 / VPI-5482 / E50).